The primary structure comprises 100 residues: Large ribosomal subunit protein bL27 (100 aa).

Residues 1 to 13 (MNKLYWLTDLQLF) constitute a propeptide that is removed on maturation. Positions 17–39 (KGVGSSKNGRDSNPKYLGAKLGD) are disordered.

Belongs to the bacterial ribosomal protein bL27 family. Post-translationally, the N-terminus is cleaved by ribosomal processing cysteine protease Prp.

The protein is Large ribosomal subunit protein bL27 of Ureaplasma parvum serovar 3 (strain ATCC 700970).